We begin with the raw amino-acid sequence, 124 residues long: Ribonuclease pancreatic (124 aa).

Over residues 1-13 the composition is skewed to basic and acidic residues; the sequence is KESAAAKFERQHM. The segment at 1-24 is disordered; it reads KESAAAKFERQHMDPSMSSASSSN. Residues Lys-7 and Arg-10 each coordinate substrate. His-12 functions as the Proton acceptor in the catalytic mechanism. 4 disulfides stabilise this stretch: Cys-26-Cys-84, Cys-40-Cys-95, Cys-58-Cys-110, and Cys-65-Cys-72. Substrate contacts are provided by residues 41 to 45, Lys-66, and Arg-85; that span reads KPVNT. His-119 (proton donor) is an active-site residue.

This sequence belongs to the pancreatic ribonuclease family. As to quaternary structure, monomer. Interacts with and forms tight 1:1 complexes with RNH1. Dimerization of two such complexes may occur. Interaction with RNH1 inhibits this protein. In terms of tissue distribution, pancreas.

It is found in the secreted. It carries out the reaction an [RNA] containing cytidine + H2O = an [RNA]-3'-cytidine-3'-phosphate + a 5'-hydroxy-ribonucleotide-3'-[RNA].. The enzyme catalyses an [RNA] containing uridine + H2O = an [RNA]-3'-uridine-3'-phosphate + a 5'-hydroxy-ribonucleotide-3'-[RNA].. Endonuclease that catalyzes the cleavage of RNA on the 3' side of pyrimidine nucleotides. Acts on single-stranded and double-stranded RNA. The polypeptide is Ribonuclease pancreatic (RNASE1) (Dama dama (Fallow deer)).